The sequence spans 182 residues: Ribosome maturation factor RimM (182 aa).

A PRC barrel domain is found at 102–182 (GEGDYYWKDL…TIEVDWDPGF (81 aa)).

Belongs to the RimM family. As to quaternary structure, binds ribosomal protein uS19.

The protein localises to the cytoplasm. In terms of biological role, an accessory protein needed during the final step in the assembly of 30S ribosomal subunit, possibly for assembly of the head region. Essential for efficient processing of 16S rRNA. May be needed both before and after RbfA during the maturation of 16S rRNA. It has affinity for free ribosomal 30S subunits but not for 70S ribosomes. The sequence is that of Ribosome maturation factor RimM from Pectobacterium carotovorum subsp. carotovorum (strain PC1).